Consider the following 181-residue polypeptide: Inner membrane-spanning protein YciB (181 aa).

Transmembrane regions (helical) follow at residues F19–A39, M50–D70, I80–L100, L118–F138, and F148–L168.

Belongs to the YciB family.

It localises to the cell inner membrane. Plays a role in cell envelope biogenesis, maintenance of cell envelope integrity and membrane homeostasis. The polypeptide is Inner membrane-spanning protein YciB (Shewanella amazonensis (strain ATCC BAA-1098 / SB2B)).